The sequence spans 488 residues: Ribulose bisphosphate carboxylase large chain (488 aa).

Substrate contacts are provided by Asn127 and Thr177. Lys179 serves as the catalytic Proton acceptor. A substrate-binding site is contributed by Lys181. 3 residues coordinate Mg(2+): Lys205, Asp207, and Glu208. At Lys205 the chain carries N6-carboxylysine. His297 acts as the Proton acceptor in catalysis. 3 residues coordinate substrate: Arg298, His330, and Ser382.

Belongs to the RuBisCO large chain family. Type I subfamily. As to quaternary structure, heterohexadecamer of 8 large chains and 8 small chains. The cofactor is Mg(2+).

The protein localises to the plastid. Its subcellular location is the chloroplast. The catalysed reaction is 2 (2R)-3-phosphoglycerate + 2 H(+) = D-ribulose 1,5-bisphosphate + CO2 + H2O. It catalyses the reaction D-ribulose 1,5-bisphosphate + O2 = 2-phosphoglycolate + (2R)-3-phosphoglycerate + 2 H(+). Its function is as follows. RuBisCO catalyzes two reactions: the carboxylation of D-ribulose 1,5-bisphosphate, the primary event in carbon dioxide fixation, as well as the oxidative fragmentation of the pentose substrate in the photorespiration process. Both reactions occur simultaneously and in competition at the same active site. The polypeptide is Ribulose bisphosphate carboxylase large chain (rbcL) (Pyropia dentata (Red alga)).